Reading from the N-terminus, the 233-residue chain is LOB domain-containing protein 40 (233 aa).

Residues 3–109 (MSCNGCRVLR…VEAVMRGSPV (107 aa)) form the LOB domain. Residues 143-160 (KRRSRGACKEERNVRSLS) are compositionally biased toward basic and acidic residues. Residues 143 to 183 (KRRSRGACKEERNVRSLSHESSLSHESPVSSEETTTEEPKT) are disordered. The span at 161-175 (HESSLSHESPVSSEE) shows a compositional bias: low complexity.

It belongs to the LOB domain-containing protein family. As to expression, expressed in roots and flowers.

This chain is LOB domain-containing protein 40 (LBD40), found in Arabidopsis thaliana (Mouse-ear cress).